A 180-amino-acid chain; its full sequence is Adenine phosphoribosyltransferase (180 aa).

Serine 2 is subject to N-acetylserine. 2 positions are modified to phosphoserine: serine 15 and serine 30. Tyrosine 60 carries the phosphotyrosine modification. At serine 66 the chain carries Phosphoserine. Residue lysine 114 is modified to N6-acetyllysine. Threonine 135 is modified (phosphothreonine).

The protein belongs to the purine/pyrimidine phosphoribosyltransferase family. As to quaternary structure, homodimer.

It is found in the cytoplasm. It carries out the reaction AMP + diphosphate = 5-phospho-alpha-D-ribose 1-diphosphate + adenine. It functions in the pathway purine metabolism; AMP biosynthesis via salvage pathway; AMP from adenine: step 1/1. Its function is as follows. Catalyzes a salvage reaction resulting in the formation of AMP, that is energically less costly than de novo synthesis. The protein is Adenine phosphoribosyltransferase of Mastomys natalensis (African soft-furred rat).